Here is a 352-residue protein sequence, read N- to C-terminus: Selenide, water dikinase (352 aa).

Cys-23 is a catalytic residue. ATP is bound by residues Lys-26 and 54–56 (SRD). Position 57 (Asp-57) interacts with Mg(2+). ATP contacts are provided by residues Asp-74, Asp-97, and 145 to 147 (GHS). Asp-97 is a Mg(2+) binding site. Position 233 (Asp-233) interacts with Mg(2+).

This sequence belongs to the selenophosphate synthase 1 family. Class I subfamily. In terms of assembly, homodimer. Mg(2+) serves as cofactor.

The catalysed reaction is hydrogenselenide + ATP + H2O = selenophosphate + AMP + phosphate + 2 H(+). Synthesizes selenophosphate from selenide and ATP. This chain is Selenide, water dikinase, found in Shewanella sp. (strain MR-7).